We begin with the raw amino-acid sequence, 216 residues long: Large ribosomal subunit protein uL3 (216 aa).

Residues 137 to 158 (GASHGAHKNHRKPGSIGGASTP) are disordered.

The protein belongs to the universal ribosomal protein uL3 family. In terms of assembly, part of the 50S ribosomal subunit. Forms a cluster with proteins L14 and L19.

One of the primary rRNA binding proteins, it binds directly near the 3'-end of the 23S rRNA, where it nucleates assembly of the 50S subunit. The protein is Large ribosomal subunit protein uL3 of Pseudarthrobacter chlorophenolicus (strain ATCC 700700 / DSM 12829 / CIP 107037 / JCM 12360 / KCTC 9906 / NCIMB 13794 / A6) (Arthrobacter chlorophenolicus).